Consider the following 170-residue polypeptide: Helix-loop-helix protein 3 (170 aa).

A compositionally biased stretch (low complexity) spans 1–26; that stretch reads MTASTSSTPSTSTKIPSSSKSSVTKQ. Disordered stretches follow at residues 1–42 and 118–170; these read MTAS…VDQV and TPSP…TETY. Residues 26-39 form a basic motif; degenerate region; the sequence is QTKQKRNERERKRV. In terms of domain architecture, bHLH spans 26-79; that stretch reads QTKQKRNERERKRVDQVNQGFVLLQERVPKAAGNKAKLSKVETLREAARYIQEL. The segment covering 30 to 40 has biased composition (basic and acidic residues); that stretch reads KRNERERKRVD. The tract at residues 40-79 is helix-loop-helix motif; sequence DQVNQGFVLLQERVPKAAGNKAKLSKVETLREAARYIQEL. Over residues 143-157 the composition is skewed to low complexity; it reads SHYYQESSSSSASTS.

In terms of assembly, efficient DNA binding requires dimerization with another bHLH protein. Forms a heterodimer with hlh-2. Expressed in the ADL sensory neurons.

The protein localises to the nucleus. In terms of biological role, probable transcriptional regulator. May mediate transcriptional activation by binding to the E-box motif 5'-CANNTG-3'. Plays a role in the differentiation of the hermaphrodite-specific motor neurons (HSN) that are required for normal egg laying. Might play a role in serotonin production by regulating expression of the tryptophan hydrolase tph-1 which catalyzes serotonin synthesis, in the HSN neurons. Also plays a role in HSN axon guidance towards the vulva and the ventral nerve cord, possibly by promoting the expression of the netrin receptor unc-40. Under feeding conditions, involved in the regulation of the srh-234 chemoreceptor encoding gene expression in the ADL sensory neurons. Together with hlh-2, involved in the induction of programmed cell death in the sister cells of the serotonergic neurosecretory motor (NSM) neurons, probably through the activation of egl-1 transcription. In Caenorhabditis elegans, this protein is Helix-loop-helix protein 3.